A 485-amino-acid chain; its full sequence is N-succinylglutamate 5-semialdehyde dehydrogenase 2 (485 aa).

Residue 221–226 (GSAAAG) coordinates NAD(+). Catalysis depends on residues glutamate 244 and cysteine 279.

Belongs to the aldehyde dehydrogenase family. AstD subfamily.

It carries out the reaction N-succinyl-L-glutamate 5-semialdehyde + NAD(+) + H2O = N-succinyl-L-glutamate + NADH + 2 H(+). It participates in amino-acid degradation; L-arginine degradation via AST pathway; L-glutamate and succinate from L-arginine: step 4/5. In terms of biological role, catalyzes the NAD-dependent reduction of succinylglutamate semialdehyde into succinylglutamate. This Caulobacter vibrioides (strain ATCC 19089 / CIP 103742 / CB 15) (Caulobacter crescentus) protein is N-succinylglutamate 5-semialdehyde dehydrogenase 2.